The following is a 303-amino-acid chain: Polyisoprenyl-teichoic acid--peptidoglycan teichoic acid transferase TagU (303 aa).

Over 1–6 (MSKGKK) the chain is Cytoplasmic. Residues 7–27 (IFAIIFGIILVLFLAVVGMGA) traverse the membrane as a helical; Signal-anchor for type II membrane protein segment. The Extracellular portion of the chain corresponds to 28 to 303 (KLYWDVSKSM…QELKNQLNTK (276 aa)).

The protein belongs to the LytR/CpsA/Psr (LCP) family.

The protein resides in the cell membrane. Its pathway is cell wall biogenesis. Its function is as follows. May catalyze the final step in cell wall teichoic acid biosynthesis, the transfer of the anionic cell wall polymers (APs) from their lipid-linked precursor to the cell wall peptidoglycan (PG). The sequence is that of Polyisoprenyl-teichoic acid--peptidoglycan teichoic acid transferase TagU from Enterococcus faecalis (strain ATCC 700802 / V583).